The following is a 108-amino-acid chain: Small ribosomal subunit protein uS17 (108 aa).

This sequence belongs to the universal ribosomal protein uS17 family. As to quaternary structure, part of the 30S ribosomal subunit.

Its function is as follows. One of the primary rRNA binding proteins, it binds specifically to the 5'-end of 16S ribosomal RNA. In Methanoculleus marisnigri (strain ATCC 35101 / DSM 1498 / JR1), this protein is Small ribosomal subunit protein uS17.